Reading from the N-terminus, the 341-residue chain is S-adenosylmethionine:tRNA ribosyltransferase-isomerase (341 aa).

Belongs to the QueA family. As to quaternary structure, monomer.

It is found in the cytoplasm. It catalyses the reaction 7-aminomethyl-7-carbaguanosine(34) in tRNA + S-adenosyl-L-methionine = epoxyqueuosine(34) in tRNA + adenine + L-methionine + 2 H(+). It functions in the pathway tRNA modification; tRNA-queuosine biosynthesis. Its function is as follows. Transfers and isomerizes the ribose moiety from AdoMet to the 7-aminomethyl group of 7-deazaguanine (preQ1-tRNA) to give epoxyqueuosine (oQ-tRNA). The sequence is that of S-adenosylmethionine:tRNA ribosyltransferase-isomerase from Halothermothrix orenii (strain H 168 / OCM 544 / DSM 9562).